Consider the following 72-residue polypeptide: Translation initiation factor IF-1 (72 aa).

The region spanning 1 to 72 (MTKEEAIEVD…SRGRIMFRER (72 aa)) is the S1-like domain.

This sequence belongs to the IF-1 family. In terms of assembly, component of the 30S ribosomal translation pre-initiation complex which assembles on the 30S ribosome in the order IF-2 and IF-3, IF-1 and N-formylmethionyl-tRNA(fMet); mRNA recruitment can occur at any time during PIC assembly.

It localises to the cytoplasm. Functionally, one of the essential components for the initiation of protein synthesis. Stabilizes the binding of IF-2 and IF-3 on the 30S subunit to which N-formylmethionyl-tRNA(fMet) subsequently binds. Helps modulate mRNA selection, yielding the 30S pre-initiation complex (PIC). Upon addition of the 50S ribosomal subunit IF-1, IF-2 and IF-3 are released leaving the mature 70S translation initiation complex. The polypeptide is Translation initiation factor IF-1 (Treponema pallidum (strain Nichols)).